The sequence spans 238 residues: Probable xyloglucan-specific endo-beta-1,4-glucanase A (238 aa).

The first 18 residues, 1–18, serve as a signal peptide directing secretion; the sequence is MKLSLSVALSLAASTAQA. Asn-106 and Asn-171 each carry an N-linked (GlcNAc...) asparagine glycan.

This sequence belongs to the glycosyl hydrolase 12 (cellulase H) family.

It is found in the secreted. It carries out the reaction xyloglucan + H2O = xyloglucan oligosaccharides.. In terms of biological role, catalyzes endohydrolysis of 1,4-beta-D-glucosidic linkages in xyloglucan with retention of the beta-configuration of the glycosyl residues. Specific for xyloglucan and does not hydrolyze other cell wall components. The protein is Probable xyloglucan-specific endo-beta-1,4-glucanase A (xgeA) of Aspergillus fumigatus (strain ATCC MYA-4609 / CBS 101355 / FGSC A1100 / Af293) (Neosartorya fumigata).